Reading from the N-terminus, the 461-residue chain is Ribulose bisphosphate carboxylase (461 aa).

Asn-113 is a substrate binding site. Catalysis depends on Lys-168, which acts as the Proton acceptor. Lys-170 contributes to the substrate binding site. Mg(2+) is bound by residues Lys-193, Asp-195, and Glu-196. An N6-carboxylysine modification is found at Lys-193. The active-site Proton acceptor is His-289. Substrate is bound by residues Arg-290, His-323, and Ser-370.

It belongs to the RuBisCO large chain family. Type II subfamily. As to quaternary structure, homodimer. Mg(2+) is required as a cofactor.

The catalysed reaction is 2 (2R)-3-phosphoglycerate + 2 H(+) = D-ribulose 1,5-bisphosphate + CO2 + H2O. It catalyses the reaction D-ribulose 1,5-bisphosphate + O2 = 2-phosphoglycolate + (2R)-3-phosphoglycerate + 2 H(+). Functionally, ruBisCO catalyzes two reactions: the carboxylation of D-ribulose 1,5-bisphosphate, the primary event in carbon dioxide fixation, as well as the oxidative fragmentation of the pentose substrate. Both reactions occur simultaneously and in competition at the same active site. The protein is Ribulose bisphosphate carboxylase of Thiomonas intermedia (strain K12) (Thiobacillus intermedius).